Reading from the N-terminus, the 770-residue chain is ATP-dependent RNA helicase HCA4 (770 aa).

Residues K41–A69 carry the Q motif motif. One can recognise a Helicase ATP-binding domain in the interval I72 to V246. A85–T92 contributes to the ATP binding site. The DEAD box signature appears at D194–D197. The Helicase C-terminal domain occupies K278–L437. S692, S710, S714, and S743 each carry phosphoserine. A disordered region spans residues G705–H724.

Belongs to the DEAD box helicase family. DDX10/DBP4 subfamily. Interacts with the U3 and U14 snoRNAs. Associates with pre-ribosomal complexes.

The protein localises to the nucleus. The protein resides in the nucleolus. It carries out the reaction ATP + H2O = ADP + phosphate + H(+). In terms of biological role, ATP-dependent RNA helicase required for ribosome biogenesis. Involved in the release of U14 snoRNA in pre-ribosomal complexes. Required for pre-rRNA cleavage at site A2. In Saccharomyces cerevisiae (strain ATCC 204508 / S288c) (Baker's yeast), this protein is ATP-dependent RNA helicase HCA4 (HCA4).